A 241-amino-acid chain; its full sequence is ATP synthase subunit a (241 aa).

The next 5 membrane-spanning stretches (helical) occupy residues 30 to 50 (GQVF…VVVG), 91 to 111 (FIGT…LIPW), 128 to 148 (INTT…AGLS), 193 to 213 (LVVA…VMFL), and 214 to 234 (GLFT…YYIG).

It belongs to the ATPase A chain family. As to quaternary structure, F-type ATPases have 2 components, CF(1) - the catalytic core - and CF(0) - the membrane proton channel. CF(1) has five subunits: alpha(3), beta(3), gamma(1), delta(1), epsilon(1). CF(0) has four main subunits: a, b, b' and c.

It is found in the cellular thylakoid membrane. Its function is as follows. Key component of the proton channel; it plays a direct role in the translocation of protons across the membrane. This Prochlorococcus marinus (strain SARG / CCMP1375 / SS120) protein is ATP synthase subunit a.